We begin with the raw amino-acid sequence, 235 residues long: Sugar fermentation stimulation protein homolog (235 aa).

Belongs to the SfsA family.

The protein is Sugar fermentation stimulation protein homolog of Alkaliphilus oremlandii (strain OhILAs) (Clostridium oremlandii (strain OhILAs)).